A 66-amino-acid chain; its full sequence is Stress-associated endoplasmic reticulum protein 1 (66 aa).

A disordered region spans residues 1 to 31 (MVAKQRIRMANEKHSKNITQRGNVAKTSRNA). Positions 17–30 (NITQRGNVAKTSRN) are enriched in polar residues. A helical transmembrane segment spans residues 39–59 (GPWLLALFIFVVCGSAIFQII).

The protein belongs to the RAMP4 family. In terms of assembly, interacts with SEC61B, SEC61A1 and the SEC61 complex. Interacts with CANX.

The protein resides in the membrane. It is found in the endoplasmic reticulum membrane. Its function is as follows. Interacts with target proteins during their translocation into the lumen of the endoplasmic reticulum. Protects unfolded target proteins against degradation during ER stress. May facilitate glycosylation of target proteins after termination of ER stress. May modulate the use of N-glycosylation sites on target proteins. In Bos taurus (Bovine), this protein is Stress-associated endoplasmic reticulum protein 1 (SERP1).